A 113-amino-acid chain; its full sequence is UPF0102 protein SUN_0231 (113 aa).

This sequence belongs to the UPF0102 family.

The chain is UPF0102 protein SUN_0231 from Sulfurovum sp. (strain NBC37-1).